The sequence spans 715 residues: Polyribonucleotide nucleotidyltransferase (715 aa).

Residues Asp-497 and Asp-503 each contribute to the Mg(2+) site. In terms of domain architecture, KH spans 564–623 (PRLLTMKIDPEQIGLVIGPGGKTIKSITEQTGSKIDIADDGTVTIAAIQAKKAERARDLI). An S1 motif domain is found at 633 to 701 (GEVYLGRVTR…NKGRLNLTRL (69 aa)).

Belongs to the polyribonucleotide nucleotidyltransferase family. It depends on Mg(2+) as a cofactor.

The protein localises to the cytoplasm. The enzyme catalyses RNA(n+1) + phosphate = RNA(n) + a ribonucleoside 5'-diphosphate. Involved in mRNA degradation. Catalyzes the phosphorolysis of single-stranded polyribonucleotides processively in the 3'- to 5'-direction. In Crocosphaera subtropica (strain ATCC 51142 / BH68) (Cyanothece sp. (strain ATCC 51142)), this protein is Polyribonucleotide nucleotidyltransferase.